A 303-amino-acid chain; its full sequence is tRNA pseudouridine synthase B (303 aa).

Asp47 acts as the Nucleophile in catalysis.

The protein belongs to the pseudouridine synthase TruB family. Type 1 subfamily.

It catalyses the reaction uridine(55) in tRNA = pseudouridine(55) in tRNA. Responsible for synthesis of pseudouridine from uracil-55 in the psi GC loop of transfer RNAs. The protein is tRNA pseudouridine synthase B of Legionella pneumophila (strain Lens).